The sequence spans 73 residues: Methionyl-tRNA formyltransferase (73 aa).

It belongs to the Fmt family.

It catalyses the reaction L-methionyl-tRNA(fMet) + (6R)-10-formyltetrahydrofolate = N-formyl-L-methionyl-tRNA(fMet) + (6S)-5,6,7,8-tetrahydrofolate + H(+). Attaches a formyl group to the free amino group of methionyl-tRNA(fMet). The formyl group appears to play a dual role in the initiator identity of N-formylmethionyl-tRNA by promoting its recognition by IF2 and preventing the misappropriation of this tRNA by the elongation apparatus. The protein is Methionyl-tRNA formyltransferase (fmt) of Rickettsia amblyommatis (Rickettsia amblyommii).